Here is a 317-residue protein sequence, read N- to C-terminus: L-lactate dehydrogenase (317 aa).

Residues 16 to 17 (FV), Asp-38, Lys-43, Tyr-69, and 83 to 84 (GA) each bind NAD(+). Substrate contacts are provided by Gln-86 and Arg-92. Residues Ser-105, 122 to 124 (ATN), and Ser-147 contribute to the NAD(+) site. Position 124-127 (124-127 (NPVD)) interacts with substrate. 152 to 155 (DTAR) contributes to the substrate binding site. Beta-D-fructose 1,6-bisphosphate-binding positions include Arg-157 and 169–172 (QNVH). His-179 acts as the Proton acceptor in catalysis. Tyr-224 carries the post-translational modification Phosphotyrosine. Substrate is bound at residue Thr-233.

It belongs to the LDH/MDH superfamily. LDH family. Exists as a dimer and a tetramer (dimer of dimers). The conversion occurs via the binding of fructose 1,6-bisphosphate (FBP) to the dimer.

It localises to the cytoplasm. The enzyme catalyses (S)-lactate + NAD(+) = pyruvate + NADH + H(+). It functions in the pathway fermentation; pyruvate fermentation to lactate; (S)-lactate from pyruvate: step 1/1. Allosterically activated by fructose 1,6-bisphosphate (FBP). The improvement in affinity for substrate occurs in two steps; the binding of fructose 1,6-bisphosphate (FBP) to the dimer, and the dimer to tetramer conversion. Its function is as follows. Catalyzes the conversion of lactate to pyruvate. The chain is L-lactate dehydrogenase from Geobacillus stearothermophilus (Bacillus stearothermophilus).